Reading from the N-terminus, the 331-residue chain is 6-phosphogluconolactonase (331 aa).

It belongs to the cycloisomerase 2 family.

The enzyme catalyses 6-phospho-D-glucono-1,5-lactone + H2O = 6-phospho-D-gluconate + H(+). It participates in carbohydrate degradation; pentose phosphate pathway; D-ribulose 5-phosphate from D-glucose 6-phosphate (oxidative stage): step 2/3. In terms of biological role, catalyzes the hydrolysis of 6-phosphogluconolactone to 6-phosphogluconate. In Salmonella paratyphi B (strain ATCC BAA-1250 / SPB7), this protein is 6-phosphogluconolactonase.